The primary structure comprises 837 residues: Outer membrane usher protein PsaC (837 aa).

Residues 1-23 (MKKLIVQFTTITLLMSTSFLVGA) form the signal peptide.

It belongs to the fimbrial export usher family.

Its subcellular location is the cell outer membrane. Involved in the export and assembly of PsaA (pH 6) fimbrial subunits across the outer membrane. In Yersinia pestis, this protein is Outer membrane usher protein PsaC (psaC).